The following is a 316-amino-acid chain: Tyrosine recombinase XerD (316 aa).

The Core-binding (CB) domain occupies 4–97 (AALQTQLQGY…AVRGLHRFAV (94 aa)). Positions 118-309 (RLPKSLTVDE…TVQALREVWA (192 aa)) constitute a Tyr recombinase domain. Active-site residues include arginine 162, lysine 186, histidine 261, arginine 264, and histidine 287. Tyrosine 296 acts as the O-(3'-phospho-DNA)-tyrosine intermediate in catalysis.

This sequence belongs to the 'phage' integrase family. XerD subfamily. Forms a cyclic heterotetrameric complex composed of two molecules of XerC and two molecules of XerD.

The protein resides in the cytoplasm. Its function is as follows. Site-specific tyrosine recombinase, which acts by catalyzing the cutting and rejoining of the recombining DNA molecules. The XerC-XerD complex is essential to convert dimers of the bacterial chromosome into monomers to permit their segregation at cell division. It also contributes to the segregational stability of plasmids. The protein is Tyrosine recombinase XerD of Mycobacterium leprae (strain TN).